Here is a 424-residue protein sequence, read N- to C-terminus: Histidine--tRNA ligase (424 aa).

It belongs to the class-II aminoacyl-tRNA synthetase family. In terms of assembly, homodimer.

Its subcellular location is the cytoplasm. It carries out the reaction tRNA(His) + L-histidine + ATP = L-histidyl-tRNA(His) + AMP + diphosphate + H(+). The protein is Histidine--tRNA ligase (hisS) of Bacillus subtilis (strain 168).